A 149-amino-acid chain; its full sequence is Calmodulin (149 aa).

Ala2 is subject to N-acetylalanine. EF-hand domains are found at residues 8–43, 44–79, 81–116, and 117–149; these read EQVS…LGQN, PSES…KMKD, DSEE…IGEK, and LTDD…MMQK. Ca(2+) contacts are provided by Asp21, Asp23, Asp25, Gln27, Glu32, Asp57, Asp59, Asn61, Thr63, Glu68, Asp94, Asp96, Asn98, Glu105, Asp130, Asp132, Asp134, Arg136, and Glu141.

This sequence belongs to the calmodulin family.

Its function is as follows. Calmodulin mediates the control of a large number of enzymes, ion channels and other proteins by Ca(2+). Among the enzymes to be stimulated by the calmodulin-Ca(2+) complex are a number of protein kinases and phosphatases. In Emericella nidulans (strain FGSC A4 / ATCC 38163 / CBS 112.46 / NRRL 194 / M139) (Aspergillus nidulans), this protein is Calmodulin (camA).